The chain runs to 692 residues: MARDVLIEIGLEELPARFIDDAELQLYTKTKQWLEENRISSENVISYSTPRRLAVFVKNMAEKQSSIEEDVKGPALKIAKDEDGNWTKAAQGFTKGQGLTTDDIVVREVKGISYIYVTKHIEGRPIQELLPEFKSIIESITFGKNMRWGSETIRYARPIRWLVAMMGNEVIPFEIAHVATNNVTYGHRFLGEEVTIQEPAEYEKTLKDNYVIVKAKDRETLIVEQLSKLEREHGFEIPVDQELLEEVRNLVEFPTAFVGKFEEAYLEIPPEVLITSMKEHQRYFPVHKKGVLQPYFVGVRNGDNYHIETVAKGNEKVLRARLADAEFFYNEDLHQSIDFFQEKLTKVVFQEKLGTYSDKVERMKQIADRISEKLSLESDDRKIIERAAEISKFDLMTSMVNEFTELQGIIGEKYANHFGENSATSQAIKEHYQPKHAKDDLPQTVIGSVVSVADKLDTIAGCIAVGLVPTGSQDPYGLRRQASAILRILHNEKWNLTVEELIDIALDVFQKSNVTIMEKTNEELIEFFRLRAVYLMKDKGLEVDVIHAVTDQKLGNVFVSFEKAKELSDKRNDETFKPIQEALVRVLNLSNKVETNELIREDKLETESEKILYTRYLDIKETYEKQLLHNETKQALATLAQLAAPIHAFFDNNMVMADDLEIRNNRLALIQALTSLILPYADLRKIEWKQQF.

This sequence belongs to the class-II aminoacyl-tRNA synthetase family. Tetramer of two alpha and two beta subunits.

The protein localises to the cytoplasm. The catalysed reaction is tRNA(Gly) + glycine + ATP = glycyl-tRNA(Gly) + AMP + diphosphate. This Oceanobacillus iheyensis (strain DSM 14371 / CIP 107618 / JCM 11309 / KCTC 3954 / HTE831) protein is Glycine--tRNA ligase beta subunit.